Reading from the N-terminus, the 293-residue chain is 4-diphosphocytidyl-2-C-methyl-D-erythritol kinase (293 aa).

Residue Lys16 is part of the active site. ATP is bound at residue 99 to 109; the sequence is PMGAGLGGGSS. Asp141 is an active-site residue.

The protein belongs to the GHMP kinase family. IspE subfamily.

It catalyses the reaction 4-CDP-2-C-methyl-D-erythritol + ATP = 4-CDP-2-C-methyl-D-erythritol 2-phosphate + ADP + H(+). Its pathway is isoprenoid biosynthesis; isopentenyl diphosphate biosynthesis via DXP pathway; isopentenyl diphosphate from 1-deoxy-D-xylulose 5-phosphate: step 3/6. Its function is as follows. Catalyzes the phosphorylation of the position 2 hydroxy group of 4-diphosphocytidyl-2C-methyl-D-erythritol. This is 4-diphosphocytidyl-2-C-methyl-D-erythritol kinase from Burkholderia mallei (strain NCTC 10247).